The chain runs to 486 residues: Serine/threonine-protein kinase 32C (486 aa).

The tract at residues 1 to 56 (MRSGAERRGSSAAASPGSPPPGRARPAGSDAPSALPPPAAGQPRARDSGDVRSQPR) is disordered. Residues S10, S15, and S18 each carry the phosphoserine modification. A compositionally biased stretch (low complexity) spans 24 to 33 (ARPAGSDAPS). The 261-residue stretch at 93–353 (FQILRAIGKG…LQDVQAAPAL (261 aa)) folds into the Protein kinase domain. Residues 99–107 (IGKGSFGKV) and K122 contribute to the ATP site. D216 functions as the Proton acceptor in the catalytic mechanism. Positions 396 to 405 (HKKKKRLAKN) are enriched in basic residues. Disordered regions lie at residues 396 to 419 (HKKK…QSEN) and 444 to 486 (SQDL…AGSG).

Belongs to the protein kinase superfamily. Ser/Thr protein kinase family. Mg(2+) is required as a cofactor.

It carries out the reaction L-seryl-[protein] + ATP = O-phospho-L-seryl-[protein] + ADP + H(+). The enzyme catalyses L-threonyl-[protein] + ATP = O-phospho-L-threonyl-[protein] + ADP + H(+). The protein is Serine/threonine-protein kinase 32C of Homo sapiens (Human).